We begin with the raw amino-acid sequence, 140 residues long: Phosphopantetheine adenylyltransferase (140 aa).

Ser-9 serves as a coordination point for substrate. Residues 9-10 (SF) and His-17 contribute to the ATP site. 3 residues coordinate substrate: Lys-41, Thr-74, and Arg-88. ATP contacts are provided by residues 89 to 91 (GLR), Glu-99, and 124 to 130 (KRSLSST).

Belongs to the bacterial CoaD family. As to quaternary structure, homohexamer. The cofactor is Mg(2+).

Its subcellular location is the cytoplasm. The catalysed reaction is (R)-4'-phosphopantetheine + ATP + H(+) = 3'-dephospho-CoA + diphosphate. The protein operates within cofactor biosynthesis; coenzyme A biosynthesis; CoA from (R)-pantothenate: step 4/5. Its function is as follows. Reversibly transfers an adenylyl group from ATP to 4'-phosphopantetheine, yielding dephospho-CoA (dPCoA) and pyrophosphate. In Mycoplasma mycoides subsp. mycoides SC (strain CCUG 32753 / NCTC 10114 / PG1), this protein is Phosphopantetheine adenylyltransferase.